The chain runs to 1119 residues: Solute carrier family 38 member 10 (1119 aa).

Transmembrane regions (helical) follow at residues 4–24 (AAAS…GVSV), 36–58 (IVLG…MFLV), 84–104 (LVET…YVVI), 120–140 (VGGT…VLPL), 153–173 (FSAM…LSSL), 229–249 (IFAS…FFGY), 272–292 (MLRV…ILPC), 323–343 (ALTL…PNVE), 345–365 (ILGL…PALI), and 378–398 (VVLW…LSVS). Disordered regions lie at residues 438–691 (AEDG…EEAG) and 731–1071 (KEIH…DGVI). 5 stretches are compositionally biased toward basic and acidic residues: residues 439 to 454 (EDGR…REEL), 466 to 475 (PGREDGKEAP), 493 to 522 (EAHR…ENKP), 544 to 559 (DSER…EVGK), and 592 to 603 (AKEDLGPGDRGL). Residue Ser-612 is modified to Phosphoserine. Residues 652–667 (PPLPAEKPAPGPGLPP) show a composition bias toward pro residues. Basic and acidic residues-rich tracts occupy residues 668-677 (EPREQRDVER), 731-752 (KEIH…EVHQ), and 763-773 (EAPEGKARETV). Thr-772 carries the post-translational modification Phosphothreonine. Ser-802 bears the Phosphoserine mark. Basic and acidic residues-rich tracts occupy residues 832-841 (KLRDGQKDAA) and 863-876 (PARE…RLAE). Positions 880-889 (GQSQDVTGGS) are enriched in polar residues. A phosphoserine mark is found at Ser-889, Ser-965, and Ser-997. Composition is skewed to basic and acidic residues over residues 975–1005 (HRLD…RGGE), 1012–1022 (PRQRPEPELGL), and 1033–1042 (DNAKPNRDLK).

This sequence belongs to the amino acid/polyamine transporter 2 family.

The protein localises to the membrane. It catalyses the reaction L-glutamate(out) = L-glutamate(in). It carries out the reaction L-glutamine(out) = L-glutamine(in). The catalysed reaction is L-alanine(in) = L-alanine(out). The enzyme catalyses L-serine(in) = L-serine(out). It catalyses the reaction L-leucine(in) = L-leucine(out). Facilitates bidirectional transport of amino acids. May act as a glutamate sensor that regulates glutamate-glutamine cycle and mTOR signaling in the brain. The transport mechanism remains to be elucidated. The sequence is that of Solute carrier family 38 member 10 from Homo sapiens (Human).